Reading from the N-terminus, the 207-residue chain is Melanocortin-2 receptor accessory protein 2 (207 aa).

The interval 1 to 21 (MEMSAQRLASNRTSPQSPSNS) is disordered. Over residues 7–21 (RLASNRTSPQSPSNS) the composition is skewed to polar residues. Asparagine 11 is a glycosylation site (N-linked (GlcNAc...) asparagine). Residues 47 to 67 (IVIGFWVGLAVFVIFMFFVLT) traverse the membrane as a helical segment. Residue serine 91 is modified to Phosphoserine.

Belongs to the MRAP family. As to quaternary structure, homodimer and heterodimer. Forms antiparallel homodimers and heterodimers with MRAP. Interacts with MC1R, MC2R, MC3R and MC5R. Interacts with MC4R. Predominantly expressed in the brain, mainly in the pons and cerebellum but also in regions involved in energy homeostasis, such as the hypothalamus and brainstem.

The protein localises to the cell membrane. It is found in the endoplasmic reticulum membrane. In terms of biological role, modulator of melanocortin receptor 4 (MC4R), a receptor involved in energy homeostasis. Plays a central role in the control of energy homeostasis and body weight regulation by increasing ligand-sensitivity of MC4R and MC4R-mediated generation of cAMP. May also act as a negative regulator of MC2R: competes with MRAP for binding to MC2R and impairs the binding of corticotropin (ACTH) to MC2R. May also regulate activity of other melanocortin receptors (MC1R, MC3R and MC5R); however, additional evidence is required in vivo. The sequence is that of Melanocortin-2 receptor accessory protein 2 (Mrap2) from Mus musculus (Mouse).